The primary structure comprises 153 residues: Small heat shock protein HspB (153 aa).

One can recognise a sHSP domain in the interval 30 to 140 (AGTEDNYPPC…KPRRISISGS (111 aa)).

The protein belongs to the small heat shock protein (HSP20) family.

This chain is Small heat shock protein HspB (hspB), found in Bradyrhizobium diazoefficiens (strain JCM 10833 / BCRC 13528 / IAM 13628 / NBRC 14792 / USDA 110).